The following is a 2148-amino-acid chain: Polyketide synthase 1 (2148 aa).

The segment at 19-261 (FIFGDQSSCN…TPLAVHAPYH (243 aa)) is N-terminal acylcarrier protein transacylase domain (SAT). Positions 394-829 (ESKIAIIGMS…GGNTALLVED (436 aa)) constitute a Ketosynthase family 3 (KS3) domain. Residues C566, H701, and H745 each act as for beta-ketoacyl synthase activity in the active site. Residues 929 to 1233 (AFVFSGQGSQ…PSLMRNKDGW (305 aa)) form a malonyl-CoA:ACP transacylase (MAT) domain region. Residue S1018 is the For acyl/malonyl transferase activity of the active site. The interval 1310–1624 (TASVHRIVHE…RKVLNTAMPP (315 aa)) is product template (PT) domain. Residues 1314-1447 (HRIVHESVDK…SSLHFEQPKV (134 aa)) form an N-terminal hotdog fold region. One can recognise a PKS/mFAS DH domain in the interval 1314 to 1619 (HRIVHESVDK…FQGIPRKVLN (306 aa)). H1346 acts as the Proton acceptor; for dehydratase activity in catalysis. The C-terminal hotdog fold stretch occupies residues 1474–1619 (LNSRMSSGVI…FQGIPRKVLN (146 aa)). The Proton donor; for dehydratase activity role is filled by D1533. The tract at residues 1619–1657 (NTAMPPPKSQNEAPVRSAPAKPAAKPPKSASSEHSGHFA) is disordered. The segment covering 1635–1650 (SAPAKPAAKPPKSASS) has biased composition (low complexity). Residues 1678–1752 (RNPMLAVFKI…DLATHLGLDT (75 aa)) enclose the Carrier 1 domain. At S1712 the chain carries O-(pantetheine 4'-phosphoryl)serine. Residues 1755 to 1790 (SDQSSGQSSSSGGLSPRSDSIGEITSSATTPPSLSP) are compositionally biased toward low complexity. Residues 1755–1796 (SDQSSGQSSSSGGLSPRSDSIGEITSSATTPPSLSPRGSVSG) are disordered. The 78-residue stretch at 1793 to 1870 (SVSGSQCKDV…SFKHMFQQGH (78 aa)) folds into the Carrier 2 domain. At S1830 the chain carries O-(pantetheine 4'-phosphoryl)serine. The segment at 1882 to 2146 (LKQYRATSTL…ERVAAFIRST (265 aa)) is thioesterase (TE) domain. The For thioesterase activity role is filled by S1973.

Polyketide synthase; part of the Pks1 gene cluster that mediates the biosynthesis of an anthraquinone derivative pigment that contributes to conidial pigmentation that provides protection from UV radiation, heat and cold stress. The polyketide synthase Pks1 produces 1-acetyl-2,4,6,8-tetrahydroxy-9,10-anthraquinone though condensation of acetyl-CoA with malonyl-CoA. The dehydratase EthD and the laccase Mlac1 further convert the anthraquinone derivative into the final conidial pigment. The polypeptide is Polyketide synthase 1 (Metarhizium guizhouense (strain ARSEF 977)).